Here is a 526-residue protein sequence, read N- to C-terminus: 4-alpha-glucanotransferase (526 aa).

It belongs to the disproportionating enzyme family.

The protein localises to the cytoplasm. It carries out the reaction Transfers a segment of a (1-&gt;4)-alpha-D-glucan to a new position in an acceptor, which may be glucose or a (1-&gt;4)-alpha-D-glucan.. This Chlamydia pneumoniae (Chlamydophila pneumoniae) protein is 4-alpha-glucanotransferase (malQ).